The sequence spans 398 residues: Nicotinate phosphoribosyltransferase (398 aa).

His-214 carries the phosphohistidine; by autocatalysis modification.

Belongs to the NAPRTase family. In terms of processing, transiently phosphorylated on a His residue during the reaction cycle. Phosphorylation strongly increases the affinity for substrates and increases the rate of nicotinate D-ribonucleotide production. Dephosphorylation regenerates the low-affinity form of the enzyme, leading to product release.

It catalyses the reaction nicotinate + 5-phospho-alpha-D-ribose 1-diphosphate + ATP + H2O = nicotinate beta-D-ribonucleotide + ADP + phosphate + diphosphate. It participates in cofactor biosynthesis; NAD(+) biosynthesis; nicotinate D-ribonucleotide from nicotinate: step 1/1. Catalyzes the synthesis of beta-nicotinate D-ribonucleotide from nicotinate and 5-phospho-D-ribose 1-phosphate at the expense of ATP. The polypeptide is Nicotinate phosphoribosyltransferase (Xanthomonas campestris pv. campestris (strain B100)).